Here is a 261-residue protein sequence, read N- to C-terminus: tRNA pseudouridine synthase A (261 aa).

The Nucleophile role is filled by D51. Residue Y109 participates in substrate binding.

The protein belongs to the tRNA pseudouridine synthase TruA family. Homodimer.

The enzyme catalyses uridine(38/39/40) in tRNA = pseudouridine(38/39/40) in tRNA. Formation of pseudouridine at positions 38, 39 and 40 in the anticodon stem and loop of transfer RNAs. This Shewanella piezotolerans (strain WP3 / JCM 13877) protein is tRNA pseudouridine synthase A.